The primary structure comprises 1931 residues: Cytadherence high molecular weight protein 2 (1931 aa).

3 coiled-coil regions span residues 1626–1659 (KEHQ…LTES), 1768–1846 (FNTQ…IKTN), and 1903–1930 (HAKK…KQTS).

Component of the cytoskeleton-like structure which stabilizes the shape of the wall-less Mycoplasma. This cytoskeleton-like network of accessory proteins containing HMW proteins 1 to 5 allows the proper anchoring of cytadhesin proteins in the mycoplasmal membrane at the attachment organelle. This Mycoplasmoides gallisepticum (strain R(low / passage 15 / clone 2)) (Mycoplasma gallisepticum) protein is Cytadherence high molecular weight protein 2 (hlp2).